A 289-amino-acid chain; its full sequence is Heterokaryon incompatibility protein S (289 aa).

The tract at residues 1–227 is globular domain; that stretch reads MSEPFEIVAG…KIDAIVGRNS (227 aa). The prion domain (PrD) stretch occupies residues 218–289; sequence KIDAIVGRNS…EYGGKGFWDN (72 aa).

As to quaternary structure, homodimer. Forms heterodimers with het-s.

The protein localises to the cytoplasm. In terms of biological role, responsible for heterokaryon incompatibility, a process that ensures that during spontaneous, vegetative cell fusion only compatible cells from the same colony survive (non-self-recognition). Interaction with the prion form [het-s] of incompatible cells triggers a lethal reaction that prevents the formation of viable heterokaryons. This Podospora anserina (strain S / ATCC MYA-4624 / DSM 980 / FGSC 10383) (Pleurage anserina) protein is Heterokaryon incompatibility protein S (het-S).